Consider the following 195-residue polypeptide: Putative EGF-like and EMI domain-containing protein 1 (195 aa).

The 12-residue stretch at 86 to 97 (CTCKSGYQGNRC) folds into the EGF-like domain.

The chain is Putative EGF-like and EMI domain-containing protein 1 (EGFEM1P) from Homo sapiens (Human).